The sequence spans 349 residues: Selenide, water dikinase (349 aa).

Residue Cys17 is part of the active site. Residues Lys20 and 48 to 50 (YFD) each bind ATP. A Mg(2+)-binding site is contributed by Asp51. ATP contacts are provided by residues Asp68, Asp91, and 139-141 (GHS). Asp91 provides a ligand contact to Mg(2+). Asp229 is a binding site for Mg(2+).

The protein belongs to the selenophosphate synthase 1 family. Class I subfamily. As to quaternary structure, homodimer. Mg(2+) is required as a cofactor.

The enzyme catalyses hydrogenselenide + ATP + H2O = selenophosphate + AMP + phosphate + 2 H(+). Its function is as follows. Synthesizes selenophosphate from selenide and ATP. The polypeptide is Selenide, water dikinase (Nitrosomonas eutropha (strain DSM 101675 / C91 / Nm57)).